The primary structure comprises 21 residues: Sarafotoxin-D (21 aa).

Cystine bridges form between C1/C15 and C3/C11.

It belongs to the endothelin/sarafotoxin family. As to expression, expressed by the venom gland.

It localises to the secreted. In terms of biological role, vasoconstrictor activity. These toxins cause cardiac arrest probably as a result of coronary vasospasm. May act by displaying agonistic activities towards endothelin-1 and -2 receptors (EDNRA and EDNRB). In Atractaspis engaddensis (Israeli burrowing asp), this protein is Sarafotoxin-D.